The sequence spans 572 residues: Nuclear hormone receptor family member nhr-25 (572 aa).

The segment at residues Gly15–Ala90 is a DNA-binding region (nuclear receptor). 2 consecutive NR C4-type zinc fingers follow at residues Cys18–Cys38 and Cys54–Cys78. Residues Pro307–Val567 form the NR LBD domain.

Belongs to the nuclear hormone receptor family. As to quaternary structure, interacts with lin-39. Interacts with nob-1. As to expression, expressed in the epidermis, the developing somatic gonad, and a subset of other epithelial cells.

It localises to the nucleus. In terms of biological role, orphan nuclear receptor and probable transcription activator, required during development. Plays a role in male tail tip morphogenesis regulating the expression of the transcription factor dmd-3 in a negative feedback loop. Regulates vulval precursor cell (VPC) differentiation, in concert with homeobox protein lin-39. Involved in promoting embryogenesis, in concert with homeobox protein nob-1. May play a role in modulation of lifespan and immunity. The sequence is that of Nuclear hormone receptor family member nhr-25 from Caenorhabditis elegans.